The primary structure comprises 266 residues: Undecaprenyl-diphosphatase (266 aa).

The next 8 helical transmembrane spans lie at 1 to 21, 43 to 63, 83 to 103, 114 to 134, 144 to 164, 186 to 206, 219 to 239, and 245 to 265; these read MNIF…FLPI, FDVV…QAMI, SKLA…GMIF, VEII…ASWF, TISW…LIPG, IQFA…LILI, LLAM…VFFI, and VGMM…FFFI.

The protein belongs to the UppP family.

The protein localises to the cell inner membrane. The enzyme catalyses di-trans,octa-cis-undecaprenyl diphosphate + H2O = di-trans,octa-cis-undecaprenyl phosphate + phosphate + H(+). Its function is as follows. Catalyzes the dephosphorylation of undecaprenyl diphosphate (UPP). Confers resistance to bacitracin. This chain is Undecaprenyl-diphosphatase, found in Ruthia magnifica subsp. Calyptogena magnifica.